Here is a 392-residue protein sequence, read N- to C-terminus: MDENETNQLLMTSNQYPKEAVRKRQNSRNSGGSDSSRFSRKSFKLDYRLEEDVTKSKKGKDGRFVNPWPTWKNPSIPSLLRWVITERDHSSVPCSKELDKELPVLKPYFIDDPEEAGVRGAGLRVTWLGHATVMVEMDELILLTDPIFSARASPSQRMGPKRFRRAPCTVEELPRIDAVLVSHNHYDHLDCNSVIALNERFGNELRWFVPLGLLDWMQKCGCENVIELDWWEENCVPGHDKVTFVFTPSQHWCKRTLMDDNKVLWGSWSVLGPWNRFFFAGDTGYCSAFEEIGKRFGPFDLAAIPIGAYEPRWFMKYQHVDPEEAVKIHIDVQAKKSVAIHWGTFALANEHYLEPPAKLCEALEKYRLKTEDFLVLKHGESRYLNTDDEDVE.

Met-1 is modified (N-acetylmethionine). Residues 1-16 (MDENETNQLLMTSNQY) show a composition bias toward polar residues. Residues 1–39 (MDENETNQLLMTSNQYPKEAVRKRQNSRNSGGSDSSRFS) form a disordered region. Over residues 27–36 (SRNSGGSDSS) the composition is skewed to low complexity. Zn(2+) contacts are provided by His-183 and His-185. Residue Tyr-186 coordinates an N-acyl-1,2-diacyl-sn-glycero-3-phosphoethanolamine. Zn(2+) is bound by residues Asp-187, His-188, and His-251. Deoxycholate-binding residues include Lys-254 and Met-258. Asp-282 serves as a coordination point for Zn(2+). An an N-acyl-1,2-diacyl-sn-glycero-3-phosphoethanolamine-binding site is contributed by His-319. A Zn(2+)-binding site is contributed by His-341. Ala-346 contacts deoxycholate.

This sequence belongs to the NAPE-PLD family. Homodimer. Bile acids promote the assembly of inactive monomers into an active dimer and enable catalysis. Zn(2+) is required as a cofactor. As to expression, widely expressed. Highest expression in brain, kidney and testis (at protein level). Expressed in adipose tissue (at protein level).

It localises to the golgi apparatus membrane. The protein resides in the early endosome membrane. The protein localises to the nucleus envelope. It is found in the nucleus. Its subcellular location is the nucleoplasm. The catalysed reaction is an N-acyl-1,2-diacyl-sn-glycero-3-phosphoethanolamine + H2O = an N-acylethanolamine + a 1,2-diacyl-sn-glycero-3-phosphate + H(+). It carries out the reaction N-butanoyl-1-hexadecanoyl-2-(9Z,12Z-octadecadienoyl)-sn-glycero-3-phosphoethanolamine + H2O = N-butanoyl ethanolamine + 1-hexadecanoyl-2-(9Z,12Z-octadecadienoyl)-sn-glycero-3-phosphate + H(+). The enzyme catalyses N-hexanoyl-1-hexadecanoyl-2-(9Z,12Z-octadecadienoyl)-sn-glycero-3-phosphoethanolamine + H2O = N-hexanoyl ethanolamine + 1-hexadecanoyl-2-(9Z,12Z-octadecadienoyl)-sn-glycero-3-phosphate + H(+). It catalyses the reaction N-octanoyl-1-hexadecanoyl-2-(9Z,12Z-octadecadienoyl)-sn-glycero-3-phosphoethanolamine + H2O = N-octanoyl ethanolamine + 1-hexadecanoyl-2-(9Z,12Z-octadecadienoyl)-sn-glycero-3-phosphate + H(+). The catalysed reaction is N-decanoyl-1-hexadecanoyl-2-(9Z,12Z-octadecadienoyl)-sn-glycero-3-phosphoethanolamine + H2O = N-decanoyl ethanolamine + 1-hexadecanoyl-2-(9Z,12Z-octadecadienoyl)-sn-glycero-3-phosphate + H(+). It carries out the reaction N-dodecanoyl-1,2-di-(9Z-octadecenoyl)-sn-glycero-3-phosphoethanolamine + H2O = N-dodecanoylethanolamine + 1,2-di-(9Z-octadecenoyl)-sn-glycero-3-phosphate + H(+). The enzyme catalyses N-tetradecanoyl-1,2-di-(9Z-octadecenoyl)-sn-glycero-3-phosphoethanolamine + H2O = N-tetradecanoylethanolamine + 1,2-di-(9Z-octadecenoyl)-sn-glycero-3-phosphate + H(+). It catalyses the reaction N-hexadecanoyl-1,2-di-(9Z-octadecenoyl)-sn-glycero-3-phosphoethanolamine + H2O = N-hexadecanoylethanolamine + 1,2-di-(9Z-octadecenoyl)-sn-glycero-3-phosphate + H(+). The catalysed reaction is N,1-dihexadecanoyl-2-(9Z,12Z-octadecadienoyl)-sn-glycero-3-phosphoethanolamine + H2O = 1-hexadecanoyl-2-(9Z,12Z-octadecadienoyl)-sn-glycero-3-phosphate + N-hexadecanoylethanolamine + H(+). It carries out the reaction N-octadecanoyl-1,2-di-(9Z-octadecenoyl)-sn-glycero-3-phosphoethanolamine + H2O = N-octadecanoyl ethanolamine + 1,2-di-(9Z-octadecenoyl)-sn-glycero-3-phosphate + H(+). The enzyme catalyses N,1,2-tri-(9Z-octadecenoyl)-sn-glycero-3-phosphoethanolamine + H2O = N-(9Z-octadecenoyl) ethanolamine + 1,2-di-(9Z-octadecenoyl)-sn-glycero-3-phosphate + H(+). It catalyses the reaction N-(5Z,8Z,11Z,14Z-eicosatetraenoyl)-1,2-diacyl-sn-glycero-3-phosphoethanolamine + H2O = N-(5Z,8Z,11Z,14Z-eicosatetraenoyl)-ethanolamine + a 1,2-diacyl-sn-glycero-3-phosphate + H(+). The catalysed reaction is N-(5Z,8Z,11Z,14Z-eicosatetraenoyl)-1,2-di-(9Z-octadecenoyl)-sn-glycero-3-phosphoethanolamine + H2O = N-(5Z,8Z,11Z,14Z-eicosatetraenoyl)-ethanolamine + 1,2-di-(9Z-octadecenoyl)-sn-glycero-3-phosphate + H(+). It carries out the reaction 1-O-(1Z-octadecenoyl)-2-(9Z-octadecenoyl)-sn-glycero-3-phospho-N-hexadecanoyl-ethanolamine + H2O = 1-O-(1Z-octadecenoyl)-2-(9Z-octadecenoyl)-sn-glycero-3-phosphate + N-hexadecanoylethanolamine + H(+). The enzyme catalyses N,1-diacyl-sn-glycero-3-phosphoethanolamine + H2O = an N-acylethanolamine + a 1-acyl-sn-glycero-3-phosphate + H(+). It catalyses the reaction N,1-dihexadecanoyl-sn-glycero-3-phosphoethanolamine + H2O = N-hexadecanoylethanolamine + 1-hexadecanoyl-sn-glycero-3-phosphate + H(+). The catalysed reaction is N-(5Z,8Z,11Z,14Z-eicosatetraenoyl)-1-(9Z-octadecenoyl)-sn-glycero-3-phosphoethanolamine + H2O = N-(5Z,8Z,11Z,14Z-eicosatetraenoyl)-ethanolamine + 1-(9Z-octadecenoyl)-sn-glycero-3-phosphate + H(+). Activated by divalent cations. Activated by bile acids. In terms of biological role, D-type phospholipase that hydrolyzes N-acyl-phosphatidylethanolamines (NAPEs) to produce bioactive N-acylethanolamines/fatty acid ethanolamides (NAEs/FAEs) and phosphatidic acid. Cleaves the terminal phosphodiester bond of diacyl- and alkenylacyl-NAPEs, primarily playing a role in the generation of long-chain saturated and monounsaturated NAEs in the brain. May control NAPE homeostasis in dopaminergic neuron membranes and regulate neuron survival, partly through RAC1 activation. As a regulator of lipid metabolism in the adipose tissue, mediates the crosstalk between adipocytes, gut microbiota and immune cells to control body temperature and weight. In particular, regulates energy homeostasis by promoting cold-induced brown or beige adipocyte differentiation program to generate heat from fatty acids and glucose. Has limited D-type phospholipase activity toward N-acyl lyso-NAPEs. This chain is N-acyl-phosphatidylethanolamine-hydrolyzing phospholipase D (NAPEPLD), found in Bos taurus (Bovine).